The following is a 218-amino-acid chain: DNA endonuclease I-CeuI (218 aa).

Residues Gly-65 and Glu-66 each contribute to the Mg(2+) site. The interaction with DNA stretch occupies residues 71-75 (ISTKK). Asp-86 serves as a coordination point for Mg(2+). Interaction with DNA regions lie at residues 90–94 (NVTQH), 114–116 (RHK), and 191–199 (KQQGQSNEG).

The protein belongs to the LAGLIDADG endonuclease family. Homodimer. It depends on Mg(2+) as a cofactor.

It is found in the plastid. Its subcellular location is the chloroplast. Functionally, endonuclease involved in intron homing. Recognizes a degenerate sequence of 17-19 bp to produce a staggered cut 5 bp downstream from the CeLSU.5 intron insertion site. This Chlamydomonas moewusii (Chlamydomonas eugametos) protein is DNA endonuclease I-CeuI.